Consider the following 817-residue polypeptide: Neurabin-2 (817 aa).

2 actin-binding regions span residues 1–154 (MMKT…FERS) and 164–283 (EAAA…QHRV). A disordered region spans residues 1-165 (MMKTEPRGPG…PAAAGGDKEA (165 aa)). Phosphoserine is present on residues Ser15 and Ser17. Positions 44–58 (GAHHKKYGSNVHRIK) are enriched in basic residues. A phosphoserine mark is found at Ser94, Ser100, and Ser116. Residues 100–371 (SLNENVDHSA…PERGVGNGRA (272 aa)) are interaction with D(2) dopamine receptor. Pro residues predominate over residues 131-141 (SAQPAPPPHPP). The segment at 169-255 (RLLRQERAGL…KRSRVFQPPP (87 aa)) is interaction with ADRA2A, ADRA2B and ADRA2C. Ser192 is modified (phosphoserine). Thr193 bears the Phosphothreonine mark. Residue Ser205 is modified to Phosphoserine. Phosphothreonine is present on Thr207. The segment at 216–447 (EKADSRTGLH…SEEEDPAPSR (232 aa)) is disordered. Residues 252-261 (QPPPPPPPAP) are compositionally biased toward pro residues. Residues 291-302 (KPREVRKIKPVE) show a composition bias toward basic and acidic residues. Low complexity predominate over residues 333–342 (STVATAASPA). Basic and acidic residues predominate over residues 344 to 356 (EEPKAQAAPEKEA). The span at 410–425 (LEEDDEDDEEDGEPPY) shows a compositional bias: acidic residues. Residues 417 to 494 (DEEDGEPPYE…LEKRVERLEL (78 aa)) form an interaction with protein phosphatase 1 region. Residue Ser438 is modified to Phosphoserine. Residues 447 to 451 (RKIHF) carry the PP1-binding motif motif. The tract at residues 480–525 (SAEYELEKRVERLELFPVELEKDSEGLGISIIGMGAGADMGLEKLG) is interaction with RGS2. Residues 496–584 (PVELEKDSEG…RVRFMIGRER (89 aa)) form the PDZ domain. The interval 595 to 816 (IQQTLEQERW…NLQTLRNSNS (222 aa)) is interaction with TGN38. The residue at position 658 (Ser658) is a Phosphoserine. Residues 671–788 (FKELQIKHAV…QRRVLEESEL (118 aa)) adopt a coiled-coil conformation.

In terms of assembly, interacts with DCLK2. Possibly exists as a homodimer, homotrimer or a homotetramer. Interacts with F-actin, PPP1CA, neurabin-1, TGN38 and D(2) dopamine receptor. Interacts with RGS1, RGS2, RGS4, RGS19 and ADRA1B, ADRA2A, ADRA2B, ADRA2C, CDKN2A, PPP1R2, RASGFR1 and TIAM1. Interacts (via C-terminus) with SPATA13 (via C-terminal tail). Interacts with ADRA2B. In terms of processing, stimulation of D1 (but not D2) dopamine receptors induces Ser-94 phosphorylation. Dephosphorylation of Ser-94 is mediated mainly by PP1 and to a lesser extent by PP2A. Phosphorylation of spinophilin disrupts its association with F-actin, but does not affect its binding to PP1.

The protein resides in the cytoplasm. The protein localises to the cytoskeleton. It is found in the nucleus. It localises to the cell projection. Its subcellular location is the dendritic spine. The protein resides in the postsynaptic density. The protein localises to the synapse. It is found in the cell junction. It localises to the adherens junction. Its subcellular location is the cell membrane. The protein resides in the lamellipodium. The protein localises to the filopodium. It is found in the ruffle membrane. Its function is as follows. Seems to act as a scaffold protein in multiple signaling pathways. Modulates excitatory synaptic transmission and dendritic spine morphology. Binds to actin filaments (F-actin) and shows cross-linking activity. Binds along the sides of the F-actin. May play an important role in linking the actin cytoskeleton to the plasma membrane at the synaptic junction. Believed to target protein phosphatase 1/PP1 to dendritic spines, which are rich in F-actin, and regulates its specificity toward ion channels and other substrates, such as AMPA-type and NMDA-type glutamate receptors. Plays a role in regulation of G-protein coupled receptor signaling, including dopamine D2 receptors and alpha-adrenergic receptors. May establish a signaling complex for dopaminergic neurotransmission through D2 receptors by linking receptors downstream signaling molecules and the actin cytoskeleton. Binds to ADRA1B and RGS2 and mediates regulation of ADRA1B signaling. May confer to Rac signaling specificity by binding to both, RacGEFs and Rac effector proteins. Probably regulates p70 S6 kinase activity by forming a complex with TIAM1. Required for hepatocyte growth factor (HGF)-induced cell migration. This is Neurabin-2 (PPP1R9B) from Homo sapiens (Human).